The following is a 532-amino-acid chain: MFACLRIGRFIRLGNVTVKSTNLVLRCVFIRNFATHADHLFDELPQRDLSSLNSQLSSHLRSGNPNDTLALFLQIHRASPDLSSHTFTPVLGACSLLSYPETGRQVHALMIKQGAETGTISKTALIDMYSKYGHLVDSVRVFESVEEKDLVSWNALLSGFLRNGKGKEALGVFAAMYRERVEISEFTLSSVVKTCASLKILQQGKQVHAMVVVTGRDLVVLGTAMISFYSSVGLINEAMKVYNSLNVHTDEVMLNSLISGCIRNRNYKEAFLLMSRQRPNVRVLSSSLAGCSDNSDLWIGKQIHCVALRNGFVSDSKLCNGLMDMYGKCGQIVQARTIFRAIPSKSVVSWTSMIDAYAVNGDGVKALEIFREMCEEGSGVLPNSVTFLVVISACAHAGLVKEGKECFGMMKEKYRLVPGTEHYVCFIDILSKAGETEEIWRLVERMMENDNQSIPCAIWVAVLSACSLNMDLTRGEYVARRLMEETGPENASIYVLVSNFYAAMGKWDVVEELRGKLKNKGLVKTAGHSLFI.

The N-terminal 33 residues, 1–33 (MFACLRIGRFIRLGNVTVKSTNLVLRCVFIRNF), are a transit peptide targeting the mitochondrion. PPR repeat units follow at residues 48–82 (DLSS…SPDL), 83–117 (SSHT…GAET), 118–148 (GTIS…VEEK), 149–183 (DLVS…RVEI), 184–218 (SEFT…GRDL), 223–248 (TAMI…LNVH), 250–280 (DEVM…QRPN), 281–314 (VRVL…GFVS), 315–345 (DSKL…IPSK), 346–380 (SVVS…GSGV), 383–413 (NSVT…MKEK), and 419–453 (GTEH…DNQS). The segment at 458–532 (IWVAVLSACS…VKTAGHSLFI (75 aa)) is type E motif; degenerate.

It belongs to the PPR family. PCMP-E subfamily.

The protein localises to the mitochondrion. This Arabidopsis thaliana (Mouse-ear cress) protein is Pentatricopeptide repeat-containing protein At5g66500, mitochondrial (PCMP-E38).